We begin with the raw amino-acid sequence, 255 residues long: MLPEEILFMVFSFLDVKELIACSHACSHACSQWRRICSDKLLWVQKAELFGPESPIEQFINWRKLLCVEGSYSILTRKKIIRGIAISNSGMCKAYNYGVIFLEKYHNSYRENEVYYKPYPLFDSIKYIENILSCSYGNEDPYYFYRIDIDNRVPNENIPDIIENFIGMSKKYPFINIFAFVCTQEKIQVITPLVSGLNLTMKIFHQDRWENVSEWISEVIWKRDFMCGSTFCLKKLPSLSELSVLSRYESELVTY.

In terms of domain architecture, F-box spans 1-46 (MLPEEILFMVFSFLDVKELIACSHACSHACSQWRRICSDKLLWVQK).

This chain is Putative F-box protein L126, found in Acanthamoeba polyphaga (Amoeba).